Consider the following 686-residue polypeptide: Methionine--tRNA ligase (686 aa).

The 'HIGH' region motif lies at 15-25 (PYANGSIHLGH). 4 residues coordinate Zn(2+): C146, C149, C159, and C162. Positions 332–336 (KMSKS) match the 'KMSKS' region motif. Residue K335 participates in ATP binding. The tRNA-binding domain maps to 585–686 (AFEAVDMRIA…EGAQPGMRVM (102 aa)).

Belongs to the class-I aminoacyl-tRNA synthetase family. MetG type 1 subfamily. Homodimer. Requires Zn(2+) as cofactor.

The protein resides in the cytoplasm. It carries out the reaction tRNA(Met) + L-methionine + ATP = L-methionyl-tRNA(Met) + AMP + diphosphate. Its function is as follows. Is required not only for elongation of protein synthesis but also for the initiation of all mRNA translation through initiator tRNA(fMet) aminoacylation. The chain is Methionine--tRNA ligase from Aliivibrio fischeri (strain ATCC 700601 / ES114) (Vibrio fischeri).